Here is a 382-residue protein sequence, read N- to C-terminus: Polyadenylate-binding protein 5 (382 aa).

RRM domains follow at residues 18 to 96 (AALY…WSQP), 106 to 182 (GNIF…RFKF), 199 to 276 (TNVF…RAQK), and 302 to 378 (VPIY…LGQA).

The protein resides in the cytoplasm. Its function is as follows. Binds the poly(A) tail of mRNA. May be involved in cytoplasmic regulatory processes of mRNA metabolism. Can probably bind to cytoplasmic RNA sequences other than poly(A) in vivo. The polypeptide is Polyadenylate-binding protein 5 (PABPC5) (Gorilla gorilla gorilla (Western lowland gorilla)).